A 315-amino-acid chain; its full sequence is Aspartate carbamoyltransferase catalytic subunit (315 aa).

Arginine 65 and threonine 66 together coordinate carbamoyl phosphate. L-aspartate is bound at residue lysine 93. The carbamoyl phosphate site is built by arginine 115, histidine 145, and glutamine 148. The L-aspartate site is built by arginine 179 and arginine 234. Residues glycine 275 and proline 276 each contribute to the carbamoyl phosphate site.

This sequence belongs to the aspartate/ornithine carbamoyltransferase superfamily. ATCase family. In terms of assembly, heterododecamer (2C3:3R2) of six catalytic PyrB chains organized as two trimers (C3), and six regulatory PyrI chains organized as three dimers (R2).

The catalysed reaction is carbamoyl phosphate + L-aspartate = N-carbamoyl-L-aspartate + phosphate + H(+). The protein operates within pyrimidine metabolism; UMP biosynthesis via de novo pathway; (S)-dihydroorotate from bicarbonate: step 2/3. Functionally, catalyzes the condensation of carbamoyl phosphate and aspartate to form carbamoyl aspartate and inorganic phosphate, the committed step in the de novo pyrimidine nucleotide biosynthesis pathway. The protein is Aspartate carbamoyltransferase catalytic subunit of Xanthomonas campestris pv. campestris (strain 8004).